The following is a 246-amino-acid chain: Putative carbonic anhydrase 3 (246 aa).

Positions 3–244 (GHWSYCDDDE…LNDRKIVHIV (242 aa)) constitute an Alpha-carbonic anhydrase domain. The Proton acceptor role is filled by His-61. Zn(2+) contacts are provided by His-91, His-93, and His-116. Residue 187 to 188 (TT) coordinates substrate.

This sequence belongs to the alpha-carbonic anhydrase family. It depends on Zn(2+) as a cofactor.

The catalysed reaction is hydrogencarbonate + H(+) = CO2 + H2O. Functionally, reversible hydration of carbon dioxide. In Caenorhabditis elegans, this protein is Putative carbonic anhydrase 3 (cah-3).